We begin with the raw amino-acid sequence, 136 residues long: uncharacterized protein (136 aa).

The protein localises to the mitochondrion. This is an uncharacterized protein from Arabidopsis thaliana (Mouse-ear cress).